We begin with the raw amino-acid sequence, 673 residues long: Protein VirD3 (673 aa).

Disordered regions lie at residues 36–73 (VAGE…GRLG), 171–216 (SPVN…GTSV), 229–409 (ERDT…LRSS), 478–497 (RLNG…LEDF), 520–552 (EKGK…VTPL), and 585–673 (DSSR…GCGR). Polar residues-rich tracts occupy residues 171–183 (SPVN…SNWQ), 193–216 (VQPS…GTSV), 234–246 (SETT…TISS), and 268–277 (QSLSVTVTTP). Low complexity predominate over residues 278–287 (NSNAEASSHS). The span at 288–303 (AHTETLDDVSSDRSSE) shows a compositional bias: basic and acidic residues. 2 stretches are compositionally biased toward basic and acidic residues: residues 520-534 (EKGK…DTRF) and 638-673 (AAEH…GCGR).

This chain is Protein VirD3 (virD3), found in Agrobacterium fabrum (strain C58 / ATCC 33970) (Agrobacterium tumefaciens (strain C58)).